Here is a 446-residue protein sequence, read N- to C-terminus: Phosphoglucosamine mutase (446 aa).

S101 functions as the Phosphoserine intermediate in the catalytic mechanism. Positions 101, 240, 242, and 244 each coordinate Mg(2+). The residue at position 101 (S101) is a Phosphoserine.

The protein belongs to the phosphohexose mutase family. Mg(2+) is required as a cofactor. In terms of processing, activated by phosphorylation.

The catalysed reaction is alpha-D-glucosamine 1-phosphate = D-glucosamine 6-phosphate. Catalyzes the conversion of glucosamine-6-phosphate to glucosamine-1-phosphate. In Coxiella burnetii (strain RSA 331 / Henzerling II), this protein is Phosphoglucosamine mutase.